A 327-amino-acid chain; its full sequence is RNA ligase 1 (327 aa).

The cofactor is Mg(2+). Requires Mn(2+) as cofactor. In terms of processing, AMPylates itself (auto-AMPylation).

It catalyses the reaction ATP + (ribonucleotide)n-3'-hydroxyl + 5'-phospho-(ribonucleotide)m = (ribonucleotide)n+m + AMP + diphosphate.. In terms of biological role, functions as an RNA ligase, in vitro. The ligation reaction entails three nucleotidyl transfer steps. In the first step, the RNA ligase reacts with ATP in the absence of nucleic acid to form a covalent ligase-AMP intermediate and release pyrophosphate. In step 2, the ligase-AMP binds to the nucleic acid and transfers the adenylate to the 5'-PO4 terminus to form an adenylylated intermediate. In step 3, the RNA ligase directs the attack of the 3'-OH on the 5'-phosphoanhydride linkage, resulting in a repaired 3'-5' phosphodiester and release of AMP. Exhibits selectivity for single-stranded RNA substrates and may not have nick-sealing activity on double-stranded DNA-RNA hybrids. May play a role in maintaining RNA integrity under stress conditions, for example in response to reactive oxygen species (ROS). The polypeptide is RNA ligase 1 (Mus musculus (Mouse)).